The sequence spans 491 residues: 3-octaprenyl-4-hydroxybenzoate carboxy-lyase (491 aa).

A Mn(2+)-binding site is contributed by Asn172. Prenylated FMN contacts are provided by residues 175-177, 189-191, and 194-195; these read IYR, RWL, and RG. A Mn(2+)-binding site is contributed by Glu238. Asp287 acts as the Proton donor in catalysis.

This sequence belongs to the UbiD family. As to quaternary structure, homohexamer. Requires prenylated FMN as cofactor. Mn(2+) serves as cofactor.

The protein resides in the cell membrane. It carries out the reaction a 4-hydroxy-3-(all-trans-polyprenyl)benzoate + H(+) = a 2-(all-trans-polyprenyl)phenol + CO2. Its pathway is cofactor biosynthesis; ubiquinone biosynthesis. Functionally, catalyzes the decarboxylation of 3-octaprenyl-4-hydroxy benzoate to 2-octaprenylphenol, an intermediate step in ubiquinone biosynthesis. The chain is 3-octaprenyl-4-hydroxybenzoate carboxy-lyase from Histophilus somni (strain 2336) (Haemophilus somnus).